The primary structure comprises 274 residues: NH(3)-dependent NAD(+) synthetase (274 aa).

An ATP-binding site is contributed by G46–S53. D52 is a Mg(2+) binding site. Residue R140 participates in deamido-NAD(+) binding. T160 is a binding site for ATP. E165 contacts Mg(2+). Residues K173 and D180 each contribute to the deamido-NAD(+) site. Positions 189 and 211 each coordinate ATP. H260–K261 contributes to the deamido-NAD(+) binding site.

It belongs to the NAD synthetase family. As to quaternary structure, homodimer.

It catalyses the reaction deamido-NAD(+) + NH4(+) + ATP = AMP + diphosphate + NAD(+) + H(+). It functions in the pathway cofactor biosynthesis; NAD(+) biosynthesis; NAD(+) from deamido-NAD(+) (ammonia route): step 1/1. In terms of biological role, catalyzes the ATP-dependent amidation of deamido-NAD to form NAD. Uses ammonia as a nitrogen source. In Streptococcus gordonii (strain Challis / ATCC 35105 / BCRC 15272 / CH1 / DL1 / V288), this protein is NH(3)-dependent NAD(+) synthetase.